The following is a 413-amino-acid chain: Phosphopentomutase (413 aa).

6 residues coordinate Mn(2+): Asp-11, Asp-306, His-311, Asp-347, His-348, and His-359.

It belongs to the phosphopentomutase family. The cofactor is Mn(2+).

The protein localises to the cytoplasm. It catalyses the reaction 2-deoxy-alpha-D-ribose 1-phosphate = 2-deoxy-D-ribose 5-phosphate. It carries out the reaction alpha-D-ribose 1-phosphate = D-ribose 5-phosphate. Its pathway is carbohydrate degradation; 2-deoxy-D-ribose 1-phosphate degradation; D-glyceraldehyde 3-phosphate and acetaldehyde from 2-deoxy-alpha-D-ribose 1-phosphate: step 1/2. Isomerase that catalyzes the conversion of deoxy-ribose 1-phosphate (dRib-1-P) and ribose 1-phosphate (Rib-1-P) to deoxy-ribose 5-phosphate (dRib-5-P) and ribose 5-phosphate (Rib-5-P), respectively. The polypeptide is Phosphopentomutase (Helicobacter pylori (strain HPAG1)).